The primary structure comprises 103 residues: MQPNDITFFQRFQDDILAGRKTITIRDESESHFKTGDVLRVGRFEDDGYFCTIEVTATSTVTLDTLTEKHAEQENMTLTELIKVIADIYPGQTQFYVIEFKCL.

The 96-residue stretch at 6–101 (ITFFQRFQDD…QTQFYVIEFK (96 aa)) folds into the ASCH domain. Residue K21 is the Proton acceptor of the active site. The Nucleophile role is filled by T24. E74 acts as the Proton donor in catalysis.

This sequence belongs to the N(4)-acetylcytidine amidohydrolase family.

The enzyme catalyses N(4)-acetylcytidine + H2O = cytidine + acetate + H(+). The catalysed reaction is N(4)-acetyl-2'-deoxycytidine + H2O = 2'-deoxycytidine + acetate + H(+). It carries out the reaction N(4)-acetylcytosine + H2O = cytosine + acetate + H(+). Catalyzes the hydrolysis of N(4)-acetylcytidine (ac4C). The sequence is that of N(4)-acetylcytidine amidohydrolase (yqfB) from Escherichia coli O8 (strain IAI1).